Consider the following 102-residue polypeptide: Carboxysome shell protein CcmK2 (102 aa).

In terms of domain architecture, BMC spans 4–90 (AVGMIETRGF…PHENLEYVLP (87 aa)).

This sequence belongs to the bacterial microcompartments protein family. CcmK subfamily. Homohexamer. Stacked hexamers, with the concave faces together, have also been crystallized. Interacts preferentially with itself, then with CcmK1 and CcmK4a in vitro. May interact with CcmL, this occurs at very high CcmK2 concentrations. Interacts with CcmN and CcmO in the carboxysome.

Its subcellular location is the carboxysome. In terms of biological role, probably the major shell protein of the carboxysome, a polyhedral inclusion where RuBisCO (ribulose bisphosphate carboxylase, rbcL-rbcS) is sequestered. Assembles into hexamers which make sheets that form the facets of the polyhedral carboxysome. The hexamer central pore probably regulates metabolite flux. In Thermosynechococcus vestitus (strain NIES-2133 / IAM M-273 / BP-1), this protein is Carboxysome shell protein CcmK2.